We begin with the raw amino-acid sequence, 246 residues long: 3-deoxy-manno-octulosonate cytidylyltransferase (246 aa).

Belongs to the KdsB family. Homodimer.

It localises to the cytoplasm. The enzyme catalyses 3-deoxy-alpha-D-manno-oct-2-ulosonate + CTP = CMP-3-deoxy-beta-D-manno-octulosonate + diphosphate. Its pathway is nucleotide-sugar biosynthesis; CMP-3-deoxy-D-manno-octulosonate biosynthesis; CMP-3-deoxy-D-manno-octulosonate from 3-deoxy-D-manno-octulosonate and CTP: step 1/1. It functions in the pathway bacterial outer membrane biogenesis; lipopolysaccharide biosynthesis. Its function is as follows. Activates KDO (a required 8-carbon sugar) for incorporation into bacterial lipopolysaccharide in Gram-negative bacteria. The chain is 3-deoxy-manno-octulosonate cytidylyltransferase (kpsU) from Escherichia coli.